The following is a 217-amino-acid chain: Probable septum site-determining protein MinC (217 aa).

The protein belongs to the MinC family. Interacts with MinD and FtsZ.

Functionally, cell division inhibitor that blocks the formation of polar Z ring septums. Rapidly oscillates between the poles of the cell to destabilize FtsZ filaments that have formed before they mature into polar Z rings. Prevents FtsZ polymerization. The protein is Probable septum site-determining protein MinC of Pelotomaculum thermopropionicum (strain DSM 13744 / JCM 10971 / SI).